We begin with the raw amino-acid sequence, 315 residues long: Aspartate carbamoyltransferase catalytic subunit (315 aa).

Residues Arg-64 and Thr-65 each contribute to the carbamoyl phosphate site. An L-aspartate-binding site is contributed by Lys-92. Carbamoyl phosphate contacts are provided by Arg-114, His-142, and Gln-145. Residues Arg-175 and Arg-229 each contribute to the L-aspartate site. The carbamoyl phosphate site is built by Gly-270 and Pro-271.

This sequence belongs to the aspartate/ornithine carbamoyltransferase superfamily. ATCase family. As to quaternary structure, heterododecamer (2C3:3R2) of six catalytic PyrB chains organized as two trimers (C3), and six regulatory PyrI chains organized as three dimers (R2).

It catalyses the reaction carbamoyl phosphate + L-aspartate = N-carbamoyl-L-aspartate + phosphate + H(+). Its pathway is pyrimidine metabolism; UMP biosynthesis via de novo pathway; (S)-dihydroorotate from bicarbonate: step 2/3. Catalyzes the condensation of carbamoyl phosphate and aspartate to form carbamoyl aspartate and inorganic phosphate, the committed step in the de novo pyrimidine nucleotide biosynthesis pathway. The sequence is that of Aspartate carbamoyltransferase catalytic subunit from Bradyrhizobium diazoefficiens (strain JCM 10833 / BCRC 13528 / IAM 13628 / NBRC 14792 / USDA 110).